Consider the following 114-residue polypeptide: MSQKNGIATLLQAEKEAHEIVSKARKYRQDKLKQAKTDAAKEIDSYKIQKDKELKEFEQKNAGGVGELEKKAEAGVQGELAEIKKIAEKKKDDVVKILIETVIKPSAEVHINAL.

The residue at position 2 (S2) is an N-acetylserine.

The protein belongs to the V-ATPase G subunit family. V-ATPase is a heteromultimeric enzyme composed of a peripheral catalytic V1 complex (components A to H) attached to an integral membrane V0 proton pore complex (components: a, c, c', c'', d, e, f and VOA1).

It is found in the vacuole membrane. In terms of biological role, subunit of the V1 complex of vacuolar(H+)-ATPase (V-ATPase), a multisubunit enzyme composed of a peripheral complex (V1) that hydrolyzes ATP and a membrane integral complex (V0) that translocates protons. V-ATPase is responsible for acidifying and maintaining the pH of intracellular compartments. This chain is V-type proton ATPase subunit G, found in Saccharomyces cerevisiae (strain ATCC 204508 / S288c) (Baker's yeast).